The primary structure comprises 560 residues: Dihydroxy-acid dehydratase (560 aa).

A Mg(2+)-binding site is contributed by aspartate 80. Cysteine 121 contacts [2Fe-2S] cluster. Mg(2+)-binding residues include aspartate 122 and lysine 123. Position 123 is an N6-carboxylysine (lysine 123). Cysteine 194 is a binding site for [2Fe-2S] cluster. Position 447 (glutamate 447) interacts with Mg(2+). Residue serine 473 is the Proton acceptor of the active site.

This sequence belongs to the IlvD/Edd family. As to quaternary structure, homodimer. The cofactor is [2Fe-2S] cluster. Mg(2+) serves as cofactor.

It carries out the reaction (2R)-2,3-dihydroxy-3-methylbutanoate = 3-methyl-2-oxobutanoate + H2O. The enzyme catalyses (2R,3R)-2,3-dihydroxy-3-methylpentanoate = (S)-3-methyl-2-oxopentanoate + H2O. The protein operates within amino-acid biosynthesis; L-isoleucine biosynthesis; L-isoleucine from 2-oxobutanoate: step 3/4. It participates in amino-acid biosynthesis; L-valine biosynthesis; L-valine from pyruvate: step 3/4. Its function is as follows. Functions in the biosynthesis of branched-chain amino acids. Catalyzes the dehydration of (2R,3R)-2,3-dihydroxy-3-methylpentanoate (2,3-dihydroxy-3-methylvalerate) into 2-oxo-3-methylpentanoate (2-oxo-3-methylvalerate) and of (2R)-2,3-dihydroxy-3-methylbutanoate (2,3-dihydroxyisovalerate) into 2-oxo-3-methylbutanoate (2-oxoisovalerate), the penultimate precursor to L-isoleucine and L-valine, respectively. The protein is Dihydroxy-acid dehydratase of Chloroherpeton thalassium (strain ATCC 35110 / GB-78).